Consider the following 175-residue polypeptide: R-phycoerythrin subunit beta (175 aa).

Residue C82 participates in (2R,3E)-phycoerythrobilin binding.

It belongs to the phycobiliprotein family. In terms of assembly, homodimer. In terms of processing, contains one covalently linked phycoerythrobilin chromophore.

Its function is as follows. Green-light absorbing phycoerythrin of unknown function. This chain is R-phycoerythrin subunit beta (cpeB), found in Prochlorococcus marinus subsp. pastoris (strain CCMP1986 / NIES-2087 / MED4).